Reading from the N-terminus, the 788-residue chain is MEPIIALLIGNGGREHTIAWKLCESPLISKVYVAPGNGGTASNGAESKMENVNIGVCDFEQLVKFALDKDVNLVIPGPELPLVEGIEGHFRRVGIPCFGPSALAARMEGSKVFSKDFMHRNNIPTAVYKSFSNYDHAKSFLDTCTFDVVIKADGLAAGKGVIIPKTKKEAFEALESIMLNEEFGSAGKNVVIEELLEGEELSILTFSDGYTCRSLPPAQDHKRAFDGDKGPNTGGMGCYAPTPVASPKLLETVQSTIIQPTIDGMRHEGYPLVGILFTGLMLTPSGPRVLEYNVRFGDPETQAVLPLLESDLAEIILACVNHRLDAIDIVISRKFSCAVVCVAGGYPGPYNKGDIITFDALKDKNTRIFHAGTSIRDGNVVTNGGRVLAVEATGDSVEAAVRLAYEGVKTVHFDKMFYRKDIAHHALNPKRKTREILTYENSGVSVDNGNEFVQRIKDLVKSTRRPGADADIGGFGGIFDLKQAGWNDPLLVSATDGVGSKLLIALSLNKHDTVGIDLVAMNVNDLVVQGAEPLIFLDYFATGSLDLKVSTSFVEGVVKGCKQAGCALVGGETSEMPGLYHDGHYDANGTSVGAVSRDDILPKPESFSKGDILLGLASDGVHSNGYSLVRKIVEYSDLEYTSVCPWDKNVRLGDSLLIPTRIYVKPLLHVIRKNIVKGMAHITGGGLVENVPRMLPSHLNAIIDVDTWEVPEVFKWLKDAGNVPISDMARTFNMGIGMVVAVASEDAEETMKELTSVGETVYRIGQLVDKESSSERCHLVNLNKWETF.

A GARS region spans residues 1-430 (MEPIIALLIG…DIAHHALNPK (430 aa)). An ATP-grasp domain is found at 115-321 (KDFMHRNNIP…LAEIILACVN (207 aa)). 141–202 (LDTCTFDVVI…EELLEGEELS (62 aa)) contributes to the ATP binding site. 2 residues coordinate Mg(2+): Glu291 and Asn293. The tract at residues 437-769 (LTYENSGVSV…TVYRIGQLVD (333 aa)) is AIRS.

It in the N-terminal section; belongs to the GARS family. This sequence in the C-terminal section; belongs to the AIR synthase family. Mg(2+) is required as a cofactor. It depends on Mn(2+) as a cofactor.

It is found in the cytoplasm. The protein resides in the cytosol. It catalyses the reaction 5-phospho-beta-D-ribosylamine + glycine + ATP = N(1)-(5-phospho-beta-D-ribosyl)glycinamide + ADP + phosphate + H(+). The catalysed reaction is 2-formamido-N(1)-(5-O-phospho-beta-D-ribosyl)acetamidine + ATP = 5-amino-1-(5-phospho-beta-D-ribosyl)imidazole + ADP + phosphate + H(+). It participates in purine metabolism; IMP biosynthesis via de novo pathway; 5-amino-1-(5-phospho-D-ribosyl)imidazole from N(2)-formyl-N(1)-(5-phospho-D-ribosyl)glycinamide: step 2/2. The protein operates within purine metabolism; IMP biosynthesis via de novo pathway; N(1)-(5-phospho-D-ribosyl)glycinamide from 5-phospho-alpha-D-ribose 1-diphosphate: step 2/2. Its function is as follows. Catalyzes the second and fifth step in the 'de novo' purine biosynthesis pathway; contains phosphoribosylamine--glycine ligase (GARS) and phosphoribosylformylglycinamidine cyclo-ligase (AIRS) activities. This Schizosaccharomyces pombe (strain 972 / ATCC 24843) (Fission yeast) protein is Bifunctional purine biosynthetic protein ADE1.